A 482-amino-acid chain; its full sequence is MSFPEEKKMKKLPKYRQIVHFIKEKIGNGEWPIGSKIPSQRTLAKDFQVNRSTVITALEELMADGLIEGTMGKGTVVINNTWTLMAKNSAPDWDQYVTSGIQMPSRKIVQEINQSESNTDLIQLSKGELSAEIFPLAVMKEMMGKVSQHMEAFGYEEPKGYLPLREALSNYLKTIGINVSSSSILIVSGALQALQLISMGLLQRGSTVYLDQPSYLYSLHVFQSAGMKLTGLPMDNEGLLPENVHLTRGERGRAILYTNPCFHNPTGILMSKKRREEILAVSENTQLPIIEDDIYRELWIDEIPPYPIKTIDKNGHVLYIGSLSKTLSPGLRIGWIVGPEPVIERLSDIKMQTDYGSSSLSQRVAAEWFTSGHYQQHVEKVRQQLKVRRELALSALETHLKEVATWNIPKGGFFVWIKILPSISMKLLYTKALSKGILINLGSIYAQEKGNYIRLSYAYASLEDLQKGIYELGLMIKELASR.

Positions 12-80 constitute an HTH gntR-type domain; the sequence is LPKYRQIVHF…MGKGTVVINN (69 aa). The segment at residues 40 to 59 is a DNA-binding region (H-T-H motif); sequence QRTLAKDFQVNRSTVITALE. Lysine 325 bears the N6-(pyridoxal phosphate)lysine mark.

It in the C-terminal section; belongs to the class-I pyridoxal-phosphate-dependent aminotransferase family. Pyridoxal 5'-phosphate is required as a cofactor.

This is an uncharacterized protein from Bacillus subtilis (strain 168).